The primary structure comprises 370 residues: Glutamate 5-kinase (370 aa).

Lys17 contributes to the ATP binding site. Residues Ser56, Asp143, and Asn155 each contribute to the substrate site. Residue 175 to 176 (SD) participates in ATP binding. Residues 280–357 (KGEITVDAGA…DEIEGILGYP (78 aa)) form the PUA domain.

Belongs to the glutamate 5-kinase family.

The protein localises to the cytoplasm. The enzyme catalyses L-glutamate + ATP = L-glutamyl 5-phosphate + ADP. The protein operates within amino-acid biosynthesis; L-proline biosynthesis; L-glutamate 5-semialdehyde from L-glutamate: step 1/2. Its function is as follows. Catalyzes the transfer of a phosphate group to glutamate to form L-glutamate 5-phosphate. The polypeptide is Glutamate 5-kinase (Paracoccus denitrificans (strain Pd 1222)).